The chain runs to 357 residues: DNA replication and repair protein RecF (357 aa).

Gly31 to Thr38 provides a ligand contact to ATP.

It belongs to the RecF family.

The protein localises to the cytoplasm. Its function is as follows. The RecF protein is involved in DNA metabolism; it is required for DNA replication and normal SOS inducibility. RecF binds preferentially to single-stranded, linear DNA. It also seems to bind ATP. The chain is DNA replication and repair protein RecF from Coxiella burnetii (strain CbuG_Q212) (Coxiella burnetii (strain Q212)).